Reading from the N-terminus, the 589-residue chain is 2-succinyl-5-enolpyruvyl-6-hydroxy-3-cyclohexene-1-carboxylate synthase (589 aa).

The protein belongs to the TPP enzyme family. MenD subfamily. In terms of assembly, homodimer. It depends on Mg(2+) as a cofactor. Mn(2+) is required as a cofactor. The cofactor is thiamine diphosphate.

The enzyme catalyses isochorismate + 2-oxoglutarate + H(+) = 5-enolpyruvoyl-6-hydroxy-2-succinyl-cyclohex-3-ene-1-carboxylate + CO2. It participates in quinol/quinone metabolism; 1,4-dihydroxy-2-naphthoate biosynthesis; 1,4-dihydroxy-2-naphthoate from chorismate: step 2/7. The protein operates within quinol/quinone metabolism; menaquinone biosynthesis. Its function is as follows. Catalyzes the thiamine diphosphate-dependent decarboxylation of 2-oxoglutarate and the subsequent addition of the resulting succinic semialdehyde-thiamine pyrophosphate anion to isochorismate to yield 2-succinyl-5-enolpyruvyl-6-hydroxy-3-cyclohexene-1-carboxylate (SEPHCHC). The polypeptide is 2-succinyl-5-enolpyruvyl-6-hydroxy-3-cyclohexene-1-carboxylate synthase (Myxococcus xanthus (strain DK1622)).